A 646-amino-acid polypeptide reads, in one-letter code: ATP-dependent zinc metalloprotease FtsH (646 aa).

The interval 1 to 27 (MTNNQTDRPRPPGPESRRFDNNDKNNR) is disordered. Over 1–35 (MTNNQTDRPRPPGPESRRFDNNDKNNRNRWGPIPS) the chain is Cytoplasmic. Over residues 7–26 (DRPRPPGPESRRFDNNDKNN) the composition is skewed to basic and acidic residues. Residues 36 to 56 (WAWIVLIVALLLNWLVAPILF) traverse the membrane as a helical segment. The Extracellular segment spans residues 57 to 144 (PEGKGAVSIP…QPESSTRSLL (88 aa)). A helical transmembrane segment spans residues 145 to 165 (LSILISFGPTILFFLLFLWLI). At 166–646 (SKAQSSQQGL…GLGEKQPEPA (481 aa)) the chain is on the cytoplasmic side. 237-244 (GPPGTGKT) is an ATP binding site. Histidine 459 contacts Zn(2+). Residue glutamate 460 is part of the active site. Zn(2+)-binding residues include histidine 463 and aspartate 535.

This sequence in the central section; belongs to the AAA ATPase family. The protein in the C-terminal section; belongs to the peptidase M41 family. Homohexamer. The cofactor is Zn(2+).

It localises to the cell membrane. Functionally, acts as a processive, ATP-dependent zinc metallopeptidase for both cytoplasmic and membrane proteins. Plays a role in the quality control of integral membrane proteins. This is ATP-dependent zinc metalloprotease FtsH from Thermobaculum terrenum (strain ATCC BAA-798 / CCMEE 7001 / YNP1).